A 715-amino-acid polypeptide reads, in one-letter code: Myosin light chain kinase 3 (715 aa).

Positions 67–114 are disordered; that stretch reads VTLPNDPSSQHSPEAHTGASEPLKPVSAGESSKALQKAKEISVKSSEP. The region spanning 404 to 659 is the Protein kinase domain; that stretch reads VNPVEVLGGG…ASGCMKHSWL (256 aa). ATP is bound by residues 410 to 418 and lysine 433; that span reads LGGGRFGQV. The active-site Proton acceptor is aspartate 525.

The protein belongs to the protein kinase superfamily. CAMK Ser/Thr protein kinase family. It depends on Mg(2+) as a cofactor. Post-translationally, phosphorylated on serine residues.

It is found in the cytoplasm. It carries out the reaction L-seryl-[myosin light chain] + ATP = O-phospho-L-seryl-[myosin light chain] + ADP + H(+). The enzyme catalyses L-threonyl-[myosin light chain] + ATP = O-phospho-L-threonyl-[myosin light chain] + ADP + H(+). Functionally, kinase that phosphorylates MYL2 in vitro. Increases cardiomyocyte contractility. Required for sarcomere formation in the developing heart. This chain is Myosin light chain kinase 3 (mylk3), found in Danio rerio (Zebrafish).